The following is a 133-amino-acid chain: Large ribosomal subunit protein bL20 (133 aa).

The protein belongs to the bacterial ribosomal protein bL20 family.

Binds directly to 23S ribosomal RNA and is necessary for the in vitro assembly process of the 50S ribosomal subunit. It is not involved in the protein synthesizing functions of that subunit. This is Large ribosomal subunit protein bL20 from Bartonella henselae (strain ATCC 49882 / DSM 28221 / CCUG 30454 / Houston 1) (Rochalimaea henselae).